We begin with the raw amino-acid sequence, 487 residues long: NAD(+)--arginine ADP-ribosyltransferase EFV (487 aa).

The stretch at 2–51 (SQLNKWQKELQALQKANYQETDNQLFNVYRQSLIDIKKRLKVYTENAESL) forms a coiled coil. Residues 315–487 (LDFFGQSDLQ…DNILEVTILG (173 aa)) enclose the TR mART core domain. Residues 346-358 (TSDA…KILR) and 394-400 (RGVSANE) contribute to the NAD(+) site. Active-site residues include arginine 394, serine 415, and glutamate 463. Glutamate 463 provides a ligand contact to NAD(+).

Its subcellular location is the secreted. It catalyses the reaction L-arginyl-[protein] + NAD(+) = N(omega)-(ADP-D-ribosyl)-L-arginyl-[protein] + nicotinamide + H(+). In terms of biological role, a probable mono(ADP-ribosyl)transferase, it may ADP-ribosylate Arg in target protein(s). Upon expression in yeast cells causes cell death. This is NAD(+)--arginine ADP-ribosyltransferase EFV from Enterococcus faecalis (strain ATCC 700802 / V583).